A 417-amino-acid chain; its full sequence is Echinulin prenyltransferase 1 (417 aa).

Dimethylallyl diphosphate-binding residues include R90, K179, Y181, K248, Y250, Y333, Y398, and Y402.

It belongs to the tryptophan dimethylallyltransferase family.

It catalyses the reaction cyclo(L-tryptophyl-L-alanyl) + dimethylallyl diphosphate = preechinulin + diphosphate. The protein operates within secondary metabolite biosynthesis. Its pathway is alkaloid biosynthesis. Prenyltransferase; part of the gene cluster that mediates the biosynthesis of echinulin family alkaloid. The pathway begins with the biosynthesis of the cyclic dipeptide cyclo-L-Trp-L-Ala (cyclo-TA) by the NRPS echPS via condensation of L-alanine and L-tryptophan. The prenyltransferase echPT1 then catalyzes the first prenylation step, a reverse prenylation reaction at C2, to yield preechinulin. Preechinulin is the substrate of the cytochrome P450 monooxygenase echP450 that catalyzes the formation of the double bond between C10 and C11 to produce neoechulin A. The unique prenyltransferase echPT2 functions as a competitive enzyme with echP450 for preechinulin metabolization and uses preechinulin for effective regiospecific prenylations. Preechinulin is prenylated by echPT2 at C5 or C7. C7-prenylation leads to accumulation of tardioxopiperazine B without further modification by echPT2. In contrast, the C5-prenylated tardioxopiperazine A can be prenylated again by echPT2, predominantly at C7 to form echinulin or less frequently at C4 to give variecolorin L. EchPT2 also accepts neoechilunin A to produce varlecolorin G (prenylation at C5) or isoechinulin A (prenylation at C7). EchPT2 further converts isoechinulin A into dehydroechinulin. Moreover, a yet unidentified enzyme can also convert neoechilunin A into neoechilunin B by introducing a double bond between positions C14 and C17 and thus provides a further substrate to echPT2 for C5 and C7 prenylation. The protein is Echinulin prenyltransferase 1 of Aspergillus ruber (Eurotium rubrum).